We begin with the raw amino-acid sequence, 329 residues long: NADH-quinone oxidoreductase subunit H (329 aa).

A run of 9 helical transmembrane segments spans residues Leu-9–Ile-29, Gly-42–Phe-62, Phe-75–Ile-95, Ile-117–Gly-137, Ile-154–Val-174, Gly-188–Ala-208, Leu-238–Ile-258, Trp-269–Trp-291, and Trp-309–Ile-329.

It belongs to the complex I subunit 1 family. In terms of assembly, NDH-1 is composed of 14 different subunits. Subunits NuoA, H, J, K, L, M, N constitute the membrane sector of the complex.

It localises to the cell inner membrane. It carries out the reaction a quinone + NADH + 5 H(+)(in) = a quinol + NAD(+) + 4 H(+)(out). NDH-1 shuttles electrons from NADH, via FMN and iron-sulfur (Fe-S) centers, to quinones in the respiratory chain. The immediate electron acceptor for the enzyme in this species is believed to be ubiquinone. Couples the redox reaction to proton translocation (for every two electrons transferred, four hydrogen ions are translocated across the cytoplasmic membrane), and thus conserves the redox energy in a proton gradient. This subunit may bind ubiquinone. The polypeptide is NADH-quinone oxidoreductase subunit H (Helicobacter pylori (strain Shi470)).